The chain runs to 472 residues: Cysteine--tRNA ligase (472 aa).

Cysteine 29 provides a ligand contact to Zn(2+). Residues 31–41 (PTVYDFAHIGN) carry the 'HIGH' region motif. Zn(2+) is bound by residues cysteine 227, histidine 252, and glutamate 256. A 'KMSKS' region motif is present at residues 285–289 (KMSKS). ATP is bound at residue lysine 288.

This sequence belongs to the class-I aminoacyl-tRNA synthetase family. As to quaternary structure, monomer. Zn(2+) is required as a cofactor.

The protein localises to the cytoplasm. It catalyses the reaction tRNA(Cys) + L-cysteine + ATP = L-cysteinyl-tRNA(Cys) + AMP + diphosphate. This Bradyrhizobium sp. (strain BTAi1 / ATCC BAA-1182) protein is Cysteine--tRNA ligase.